The sequence spans 156 residues: ATP synthase subunit b (156 aa).

Residues 7–29 traverse the membrane as a helical segment; that stretch reads LFAQMVVFLVLAWFTMKFVWPPL.

The protein belongs to the ATPase B chain family. As to quaternary structure, F-type ATPases have 2 components, F(1) - the catalytic core - and F(0) - the membrane proton channel. F(1) has five subunits: alpha(3), beta(3), gamma(1), delta(1), epsilon(1). F(0) has three main subunits: a(1), b(2) and c(10-14). The alpha and beta chains form an alternating ring which encloses part of the gamma chain. F(1) is attached to F(0) by a central stalk formed by the gamma and epsilon chains, while a peripheral stalk is formed by the delta and b chains.

The protein localises to the cell inner membrane. In terms of biological role, f(1)F(0) ATP synthase produces ATP from ADP in the presence of a proton or sodium gradient. F-type ATPases consist of two structural domains, F(1) containing the extramembraneous catalytic core and F(0) containing the membrane proton channel, linked together by a central stalk and a peripheral stalk. During catalysis, ATP synthesis in the catalytic domain of F(1) is coupled via a rotary mechanism of the central stalk subunits to proton translocation. Its function is as follows. Component of the F(0) channel, it forms part of the peripheral stalk, linking F(1) to F(0). This Burkholderia lata (strain ATCC 17760 / DSM 23089 / LMG 22485 / NCIMB 9086 / R18194 / 383) protein is ATP synthase subunit b.